A 95-amino-acid chain; its full sequence is Small ribosomal subunit protein uS19 (95 aa).

A disordered region spans residues 73 to 95; the sequence is EFSPTRTYRGHGADKNAKGSKKK.

The protein belongs to the universal ribosomal protein uS19 family.

Functionally, protein S19 forms a complex with S13 that binds strongly to the 16S ribosomal RNA. This chain is Small ribosomal subunit protein uS19, found in Deinococcus radiodurans (strain ATCC 13939 / DSM 20539 / JCM 16871 / CCUG 27074 / LMG 4051 / NBRC 15346 / NCIMB 9279 / VKM B-1422 / R1).